The primary structure comprises 88 residues: Cytochrome c oxidase subunit 6B2 (88 aa).

Positions 1–21 are disordered; it reads MLGVQAQMPAPGQWTTPPFDP. The CHCH domain maps to 29-75; the sequence is TRNCYQNFLDYHRCVKTMDRRGKNTQACDYYFRVFHSLCPVSWVQRW. The short motif at 32–42 is the Cx9C motif element; sequence CYQNFLDYHRC. 2 cysteine pairs are disulfide-bonded: cysteine 32-cysteine 67 and cysteine 42-cysteine 56. The short motif at 56 to 67 is the Cx10C motif element; sequence CDYYFRVFHSLC.

It belongs to the cytochrome c oxidase subunit 6B family. Component of the cytochrome c oxidase (complex IV, CIV), a multisubunit enzyme composed of 14 subunits. The complex is composed of a catalytic core of 3 subunits MT-CO1, MT-CO2 and MT-CO3, encoded in the mitochondrial DNA, and 11 supernumerary subunits COX4I, COX5A, COX5B, COX6A, COX6B, COX6C, COX7A, COX7B, COX7C, COX8 and NDUFA4, which are encoded in the nuclear genome. The complex exists as a monomer or a dimer and forms supercomplexes (SCs) in the inner mitochondrial membrane with NADH-ubiquinone oxidoreductase (complex I, CI) and ubiquinol-cytochrome c oxidoreductase (cytochrome b-c1 complex, complex III, CIII), resulting in different assemblies (supercomplex SCI(1)III(2)IV(1) and megacomplex MCI(2)III(2)IV(2)). Testis specific.

It is found in the mitochondrion inner membrane. It participates in energy metabolism; oxidative phosphorylation. Component of the cytochrome c oxidase, the last enzyme in the mitochondrial electron transport chain which drives oxidative phosphorylation. The respiratory chain contains 3 multisubunit complexes succinate dehydrogenase (complex II, CII), ubiquinol-cytochrome c oxidoreductase (cytochrome b-c1 complex, complex III, CIII) and cytochrome c oxidase (complex IV, CIV), that cooperate to transfer electrons derived from NADH and succinate to molecular oxygen, creating an electrochemical gradient over the inner membrane that drives transmembrane transport and the ATP synthase. Cytochrome c oxidase is the component of the respiratory chain that catalyzes the reduction of oxygen to water. Electrons originating from reduced cytochrome c in the intermembrane space (IMS) are transferred via the dinuclear copper A center (CU(A)) of subunit 2 and heme A of subunit 1 to the active site in subunit 1, a binuclear center (BNC) formed by heme A3 and copper B (CU(B)). The BNC reduces molecular oxygen to 2 water molecules using 4 electrons from cytochrome c in the IMS and 4 protons from the mitochondrial matrix. The protein is Cytochrome c oxidase subunit 6B2 (Cox6b2) of Rattus norvegicus (Rat).